Here is a 67-residue protein sequence, read N- to C-terminus: DNA-directed RNA polymerase subunit omega (67 aa).

The protein belongs to the RNA polymerase subunit omega family. As to quaternary structure, the RNAP catalytic core consists of 2 alpha, 1 beta, 1 beta' and 1 omega subunit. When a sigma factor is associated with the core the holoenzyme is formed, which can initiate transcription.

It catalyses the reaction RNA(n) + a ribonucleoside 5'-triphosphate = RNA(n+1) + diphosphate. Its function is as follows. Promotes RNA polymerase assembly. Latches the N- and C-terminal regions of the beta' subunit thereby facilitating its interaction with the beta and alpha subunits. This is DNA-directed RNA polymerase subunit omega from Listeria monocytogenes serotype 4b (strain F2365).